The primary structure comprises 216 residues: Elongation factor Ts (216 aa).

Positions 81-84 (TDFV) are involved in Mg(2+) ion dislocation from EF-Tu.

This sequence belongs to the EF-Ts family.

Its subcellular location is the cytoplasm. Functionally, associates with the EF-Tu.GDP complex and induces the exchange of GDP to GTP. It remains bound to the aminoacyl-tRNA.EF-Tu.GTP complex up to the GTP hydrolysis stage on the ribosome. In Geotalea daltonii (strain DSM 22248 / JCM 15807 / FRC-32) (Geobacter daltonii), this protein is Elongation factor Ts.